The sequence spans 790 residues: Threonine--tRNA ligase 2, cytoplasmic (790 aa).

Alanine 2 is subject to N-acetylalanine. Residues 13 to 68 adopt a coiled-coil conformation; the sequence is SRLQRQEEDIRWLCAEVQRLRDEQLRGPERGQAEGPRLTREVAQLQAENRDLHQRL. A disordered region spans residues 80 to 117; it reads RTEAGRAAAHEPPTQNQEKDTKKKRLKQSEPGREVKQP. The segment covering 96–117 has biased composition (basic and acidic residues); that stretch reads QEKDTKKKRLKQSEPGREVKQP. In terms of domain architecture, TGS spans 148–210; the sequence is NVISVRVAGG…EGDSTVELLM (63 aa). Serine 441 is modified (phosphoserine). The short motif at 774 to 780 is the Nuclear localization signal element; it reads KLKNLKK.

The protein belongs to the class-II aminoacyl-tRNA synthetase family. May be a component of the multisynthetase complex (MSC), a large multi-subunit complex which contains at least eight different aminoacyl-tRNA synthetases plus three auxillary subunits AIMP1, AIMP2 and EEF1E1. Interacts with the MSC components EPRS1, AIMP1, AIMP2 and KARS1. As to expression, ubiquitous (at protein level). Strongly expressed in muscle (at protein level). Moderately expressed in heart and liver (at protein level). Weakly expressed in stomach, kidney, testis, spleen, brain, fat and lung (at protein level).

It is found in the cytoplasm. The protein localises to the nucleus. It catalyses the reaction tRNA(Thr) + L-threonine + ATP = L-threonyl-tRNA(Thr) + AMP + diphosphate + H(+). Its function is as follows. Catalyzes the attachment of threonine to tRNA(Thr) in a two-step reaction: threonine is first activated by ATP to form Thr-AMP and then transferred to the acceptor end of tRNA(Thr). Also edits incorrectly charged tRNA(Thr) via its editing domain, at the post-transfer stage. The polypeptide is Threonine--tRNA ligase 2, cytoplasmic (Tars3) (Mus musculus (Mouse)).